Consider the following 1256-residue polypeptide: MAKKFNYKLPSMVALTLVGSAVTAHQVQAAETTQDQTTNKNVLDSNKVKATTEQAKAEVKNPTQNISGTQVYQDPAIVQPKTANNKTGNAQVSQKVDTAQVNGDTRANQSATTNNTQPVAKSTSTTAPKTNTNVTNAGYSLVDDEDDNSENQINPELIKSAAKPAALETQYKAAAPKAATTSAPKAKTEATPKVTTFSASAQPRSVAATPKTSLPKYKPQVNSSINDYIRKNNLKAPKIEEDYTSYFPKYAYRNGVGRPEGIVVHDTANDRSTINGEISYMKNNYQNAFVHAFVDGDRIIETAPTDYLSWGVGAVGNPRFINVEIVHTHDYASFARSMNNYADYAATQLQYYGLKPDSAEYDGNGTVWTHYAVSKYLGGTDHADPHGYLRSHNYSYDQLYDLINEKYLIKMGKVAPWGTQSTTTPTTPSKPTTPSKPSTGKLTVAANNGVAQIKPTNSGLYTTVYDKTGKATNEVQKTFAVSKTATLGNQKFYLVQDYNSGNKFGWVKEGDVVYNTAKSPVNVNQSYSIKPGTKLYTVPWGTSKQVAGSVSGSGNQTFKASKQQQIDKSIYLYGSVNGKSGWVSKAYLVDTAKPTPTPTPKPSTPTTNNKLTVSSLNGVAQINAKNNGLFTTVYDKTGKPTKEVQKTFAVTKEASLGGNKFYLVKDYNSPTLIGWVKQGDVIYNNAKSPVNVMQTYTVKPGTKLYSVPWGTYKQEAGAVSGTGNQTFKATKQQQIDKSIYLFGTVNGKSGWVSKAYLAVPAAPKKAVAQPKTAVKAYTVTKPQTTQTVSKIAQVKPNNTGIRASVYEKTAKNGAKYADRTFYVTKERAHGNETYVLLNNTSHNIPLGWFNVKDLNVQNLGKEVKTTQKYTVNKSNNGLSMVPWGTKNQVILTGNNIAQGTFNATKQVSVGKDVYLYGTINNRTGWVNAKDLTAPTAVKPTTSAAKDYNYTYVIKNGNGYYYVTPNSDTAKYSLKAFNEQPFAVVKEQVINGQTWYYGKLSNGKLAWIKSTDLAKELIKYNQTGMTLNQVAQIQAGLQYKPQVQRVPGKWTDANFNDVKHAMDTKRLAQDPALKYQFLRLDQPQNISIDKINQFLKGKGVLENQGAAFNKAAQMYGINEVYLISHALLETGNGTSQLAKGADVVNNKVVTNSNTKYHNVFGIAAYDNDPLREGIKYAKQAGWDTVSKAIVGGAKFIGNSYVKAGQNTLYKMRWNPAHPGTHQYATDIDWANINAKIIKGYYDKIGEVGKYFDIPQYK.

An N-terminal signal peptide occupies residues 1-29 (MAKKFNYKLPSMVALTLVGSAVTAHQVQA). Over residues 103–138 (GDTRANQSATTNNTQPVAKSTSTTAPKTNTNVTNAG) the composition is skewed to polar residues. Disordered regions lie at residues 103-151 (GDTR…NSEN), 173-219 (AAAP…KYKP), and 419-440 (TQST…PSTG). Low complexity-rich tracts occupy residues 173–196 (AAAP…KVTT) and 421–439 (STTT…KPST). The N-acetylmuramoyl-L-alanine amidase stretch occupies residues 199–775 (ASAQPRSVAA…AVAQPKTAVK (577 aa)). 7 consecutive GW domains span residues 443–517 (TVAA…YNTA), 519–593 (SPVN…DTAK), 612–686 (TVSS…YNNA), 688–762 (SPVN…VPAA), 784–859 (TTQT…VQNL), 861–936 (KEVK…APTA), and 943–1017 (AAKD…KELI). An endo-beta-N-acetylglucosaminidase region spans residues 776–1256 (AYTVTKPQTT…GKYFDIPQYK (481 aa)).

In the N-terminal section; belongs to the N-acetylmuramoyl-L-alanine amidase 2 family. This sequence in the C-terminal section; belongs to the glycosyl hydrolase 73 family. In terms of assembly, oligomer; forms a ring structure at the cell surface which is important for efficient partitioning of daughter cells after cell division. Undergoes proteolytic processing to generate the two extracellular lytic enzymes, probably at the septal region on the cell surface.

It is found in the secreted. It catalyses the reaction Hydrolyzes the link between N-acetylmuramoyl residues and L-amino acid residues in certain cell-wall glycopeptides.. The enzyme catalyses an N(4)-(oligosaccharide-(1-&gt;3)-[oligosaccharide-(1-&gt;6)]-beta-D-Man-(1-&gt;4)-beta-D-GlcNAc-(1-&gt;4)-alpha-D-GlcNAc)-L-asparaginyl-[protein] + H2O = an oligosaccharide-(1-&gt;3)-[oligosaccharide-(1-&gt;6)]-beta-D-Man-(1-&gt;4)-D-GlcNAc + N(4)-(N-acetyl-beta-D-glucosaminyl)-L-asparaginyl-[protein]. Functionally, endohydrolysis of the di-N-acetylchitobiosyl unit in high-mannose glycopeptides and glycoproteins containing the -[(Man)5(GlcNAc)2]-Asn structure. One N-acetyl-D-glucosamine residue remains attached to the protein; the rest of the oligosaccharide is released intact. Cleaves the peptidoglycan connecting the daughter cells at the end of the cell division cycle, resulting in the separation of the two newly divided cells. Acts as an autolysin in penicillin-induced lysis. This chain is Bifunctional autolysin (atl), found in Staphylococcus aureus (strain MW2).